A 286-amino-acid chain; its full sequence is NAD kinase (286 aa).

The active-site Proton acceptor is the D74. Residues 74-75 (DG), 148-149 (ND), D178, A186, 189-194 (TAYNLS), and Q244 contribute to the NAD(+) site.

The protein belongs to the NAD kinase family. It depends on a divalent metal cation as a cofactor.

The protein resides in the cytoplasm. The catalysed reaction is NAD(+) + ATP = ADP + NADP(+) + H(+). Involved in the regulation of the intracellular balance of NAD and NADP, and is a key enzyme in the biosynthesis of NADP. Catalyzes specifically the phosphorylation on 2'-hydroxyl of the adenosine moiety of NAD to yield NADP. This is NAD kinase from Campylobacter jejuni (strain RM1221).